A 1719-amino-acid chain; its full sequence is 5'-3' exoribonuclease 1 (1719 aa).

The span at 1268–1298 (HKSGFTDHSVRHQQRKHDSQRKFKEEYKSPK) shows a compositional bias: basic and acidic residues. The segment at 1268 to 1317 (HKSGFTDHSVRHQQRKHDSQRKFKEEYKSPKAECQSQKLSSKQTSGGSAR) is disordered. A compositionally biased stretch (polar residues) spans 1301 to 1314 (CQSQKLSSKQTSGG). Phosphoserine is present on Ser1382. Positions 1397–1430 (ILKIDSPDTRDSKNDMKKSDNEATVSSRRDERGV) are enriched in basic and acidic residues. Disordered regions lie at residues 1397–1445 (ILKI…KPHG) and 1634–1719 (ENKE…KPSE). Residues 1638-1660 (AQSSQATPLQTNKPGSSEATKMT) show a composition bias toward polar residues. Low complexity predominate over residues 1661–1680 (PQESPPASSSSSQAAQPVSS). The segment covering 1681-1690 (HVETASQGHV) has biased composition (polar residues).

It belongs to the 5'-3' exonuclease family. In terms of assembly, found in a mRNP complex with UPF1, UPF2, UPF3B and XRN1. Associates with alpha and beta tubulins. Interacts with DIS3L2. Interacts with ZC3HAV1 in an RNA-dependent manner. Interacts with ZFP36L1. Interacts with TRIM71 (via NHL repeats) in an RNA-dependent manner. Interacts with YTHDC2 (via ANK repeats). Interacts with DHX34; the interaction is RNA-independent. Expressed in heart, brain (spinal cord, dorsal root and superior cervical ganglia, neurons of the cerebrum and brain stem), peripheral nerve fibers in the skin and intestine, spleen, lung, liver, skeletal muscle, kidney and testis.

The protein resides in the cytoplasm. In terms of biological role, major 5'-3' exoribonuclease involved in mRNA decay. Required for the 5'-3'-processing of the G4 tetraplex-containing DNA and RNA substrates. The kinetic of hydrolysis is faster for G4 RNA tetraplex than for G4 DNA tetraplex and monomeric RNA tetraplex. Binds to RNA and DNA. Plays a role in replication-dependent histone mRNA degradation. The sequence is that of 5'-3' exoribonuclease 1 from Mus musculus (Mouse).